The primary structure comprises 478 residues: Cobyric acid synthase (478 aa).

The GATase cobBQ-type domain occupies 250–437; that stretch reads QLRVVVPVLP…VHGVFDHPMH (188 aa). The active-site Nucleophile is cysteine 331. Histidine 429 is an active-site residue.

It belongs to the CobB/CobQ family. CobQ subfamily.

It participates in cofactor biosynthesis; adenosylcobalamin biosynthesis. Its function is as follows. Catalyzes amidations at positions B, D, E, and G on adenosylcobyrinic A,C-diamide. NH(2) groups are provided by glutamine, and one molecule of ATP is hydrogenolyzed for each amidation. The chain is Cobyric acid synthase from Xanthomonas euvesicatoria pv. vesicatoria (strain 85-10) (Xanthomonas campestris pv. vesicatoria).